The primary structure comprises 288 residues: MSKKLLFQFDTDATPSVFDVVVGYDGGADHITGYGNVTPDNVGAYVDGTIYTRGGKEKQSTAIFVGGGDMAAGERVFEAVKKRFFGPFRVSCMLDSNGSNTTAAAGVALVVKAAGGSVKGKKAVVLAGTGPVGMRSAALLAGEGAEVVLCGRKLDKAQAAADSVNKRFKVNVTAAETADDASRAEAVKGAHFVFTAGAIGLELLPQAAWQNESSIEIVADYNAQPPLGIGGIDATDKGKEYGGKRAFGALGIGGLKLKLHRACIAKLFESSEGVFDAEEIYKLAKEMA.

NADP(+) contacts are provided by residues 129–132 (TGPV), 152–156 (RKLDK), 195–198 (TAGA), and lysine 256.

In terms of assembly, homotrimer.

It localises to the cytoplasm. It catalyses the reaction 5,10-methylenetetrahydromethanopterin + NADP(+) = 5,10-methenyl-5,6,7,8-tetrahydromethanopterin + NADPH. The enzyme catalyses (6R)-5,10-methylene-5,6,7,8-tetrahydrofolate + NADP(+) = (6R)-5,10-methenyltetrahydrofolate + NADPH. The protein operates within one-carbon metabolism; formaldehyde degradation; formate from formaldehyde (H(4)MPT route): step 2/5. Functionally, catalyzes the dehydrogenation of methylene-H(4)MPT. Can also catalyze the reversible dehydrogenation of methylene-H(4)F with 20-fold lower catalytic efficiency. The protein is Bifunctional protein MdtA of Methylorubrum extorquens (strain ATCC 14718 / DSM 1338 / JCM 2805 / NCIMB 9133 / AM1) (Methylobacterium extorquens).